Reading from the N-terminus, the 114-residue chain is Putative membrane protein insertion efficiency factor (114 aa).

This sequence belongs to the UPF0161 family.

The protein localises to the cell inner membrane. Could be involved in insertion of integral membrane proteins into the membrane. This Nitrobacter hamburgensis (strain DSM 10229 / NCIMB 13809 / X14) protein is Putative membrane protein insertion efficiency factor.